Reading from the N-terminus, the 392-residue chain is Probable glycerol-3-phosphate dehydrogenase 2 (392 aa).

NAD(+) is bound by residues 42 to 47 (GSGNWG), phenylalanine 130, lysine 153, and alanine 196. Lysine 153 provides a ligand contact to substrate. The Proton acceptor role is filled by lysine 248. Residues arginine 312 and glutamine 341 each contribute to the NAD(+) site. 312–313 (RN) lines the substrate pocket.

This sequence belongs to the NAD-dependent glycerol-3-phosphate dehydrogenase family. As to quaternary structure, homodimer.

The protein resides in the cytoplasm. The enzyme catalyses sn-glycerol 3-phosphate + NAD(+) = dihydroxyacetone phosphate + NADH + H(+). The polypeptide is Probable glycerol-3-phosphate dehydrogenase 2 (gpdh-2) (Caenorhabditis elegans).